The sequence spans 520 residues: GMP synthase [glutamine-hydrolyzing] (520 aa).

Positions 9 to 202 (HVLIVDFGSQ…THKIAGLKGD (194 aa)) constitute a Glutamine amidotransferase type-1 domain. Residue C86 is the Nucleophile of the active site. Active-site residues include H176 and E178. The 193-residue stretch at 203–395 (WTMKAFREEA…LGLPPQFVGR (193 aa)) folds into the GMPS ATP-PPase domain. Residue 230–236 (SGGVDSS) participates in ATP binding.

Homodimer.

The enzyme catalyses XMP + L-glutamine + ATP + H2O = GMP + L-glutamate + AMP + diphosphate + 2 H(+). It participates in purine metabolism; GMP biosynthesis; GMP from XMP (L-Gln route): step 1/1. Its function is as follows. Catalyzes the synthesis of GMP from XMP. The sequence is that of GMP synthase [glutamine-hydrolyzing] from Phenylobacterium zucineum (strain HLK1).